Here is a 313-residue protein sequence, read N- to C-terminus: Probable cell division protein WhiA (313 aa).

The segment at residues 277–311 (SLKEVAAQVPDGPISKSGVNHRFQKIREIAKQLKE) is a DNA-binding region (H-T-H motif).

It belongs to the WhiA family.

Functionally, involved in cell division and chromosome segregation. This Lactobacillus johnsonii (strain CNCM I-12250 / La1 / NCC 533) protein is Probable cell division protein WhiA.